The primary structure comprises 214 residues: dITP/XTP pyrophosphatase (214 aa).

Residue serine 13–lysine 18 coordinates substrate. Mg(2+)-binding residues include glutamate 45 and aspartate 74. Residue aspartate 74 is the Proton acceptor of the active site. Residues serine 75, phenylalanine 163–aspartate 166, lysine 186, and histidine 199–arginine 200 each bind substrate.

This sequence belongs to the HAM1 NTPase family. In terms of assembly, homodimer. Mg(2+) is required as a cofactor.

It carries out the reaction XTP + H2O = XMP + diphosphate + H(+). The catalysed reaction is dITP + H2O = dIMP + diphosphate + H(+). It catalyses the reaction ITP + H2O = IMP + diphosphate + H(+). Functionally, pyrophosphatase that catalyzes the hydrolysis of nucleoside triphosphates to their monophosphate derivatives, with a high preference for the non-canonical purine nucleotides XTP (xanthosine triphosphate), dITP (deoxyinosine triphosphate) and ITP. Seems to function as a house-cleaning enzyme that removes non-canonical purine nucleotides from the nucleotide pool, thus preventing their incorporation into DNA/RNA and avoiding chromosomal lesions. This chain is dITP/XTP pyrophosphatase, found in Agrobacterium fabrum (strain C58 / ATCC 33970) (Agrobacterium tumefaciens (strain C58)).